The chain runs to 80 residues: MATLPPTANPSQQPLNLEDEDGILDEYDQYSLAHPCVVGGGRKGRTKREAAANTNRPSPGGHERKLLTKFQNSERKKAWR.

2 disordered regions span residues 1 to 21 (MATL…EDED) and 38 to 80 (VGGG…KAWR). The segment covering 61-80 (GHERKLLTKFQNSERKKAWR) has biased composition (basic and acidic residues). The short motif at 64–80 (RKLLTKFQNSERKKAWR) is the Nuclear localization signal element.

The protein belongs to the NUPR family. In terms of assembly, monomer. Directly interacts with MSL1 and binds MORF4L1, two components of histone acetyltransferase complex; the interaction with MORF4L1 may be mediated by MSL1. Interacts with EP300; this interaction enhances the effect of EP300 on PAX2 transcription factor activity. Interacts with PAXIP1; this interaction prevents PAXIP1 inhibition of PAX2 transcription factor activity. Interacts with COPS5; this interaction allows COPS5-dependent CDKN1B nuclear to cytoplasm translocation. Interacts with RNF2. Interacts with FOXO3; this interaction represses FOXO3 transactivation. Interacts with PTMA; regulates apoptotic process. Interacts with MYOD1, EP300 and DDX5; this interaction coordinates the association of anti-proliferative and pro-myogenic proteins at the myogenin promoter. Interacts with TP53; interaction is stress-dependent. Forms a complex with EP300 and TP53; this complex binds CDKN1A promoter leading to transcriptional induction of CDKN1A. Phosphorylated. Phosphorylation promotes DNA-binding activity. In terms of processing, acetylated. As to expression, highly expressed in pancreas and both ovaries and testes.

The protein resides in the nucleus. The protein localises to the cytoplasm. It localises to the perinuclear region. Functionally, transcription regulator that converts stress signals into a program of gene expression that empowers cells with resistance to the stress induced by a change in their microenvironment. Thereby participates in the regulation of many processes namely cell-cycle, apoptosis, autophagy and DNA repair responses. Controls cell cycle progression and protects cells from genotoxic stress induced by doxorubicin through the complex formation with TP53 and EP300 that binds CDKN1A promoter leading to transcriptional induction of CDKN1A. Protects pancreatic cancer cells from stress-induced cell death by binding the RELB promoter and activating its transcription, leading to IER3 transactivation. Negatively regulates apoptosis through interaction with PTMA. Inhibits autophagy-induced apoptosis in cardiac cells through FOXO3 interaction, inducing cytoplasmic translocation of FOXO3 thereby preventing the FOXO3 association with the pro-autophagic BNIP3 promoter. Inhibits cell growth and facilitates programmed cell death by apoptosis after adriamycin-induced DNA damage through transactivation of TP53. Regulates methamphetamine-induced apoptosis and autophagy through DDIT3-mediated endoplasmic reticulum stress pathway. Participates in DNA repair following gamma-irradiation by facilitating DNA access of the transcription machinery through interaction with MSL1 leading to inhibition of histone H4' Lys-16' acetylation (H4K16ac). Coactivator of PAX2 transcription factor activity, both by recruiting the EP300 cofactor to increase PAX2 transcription factor activity and by binding PAXIP1 to suppress PAXIP1-induced inhibition on PAX2. Positively regulates cell cycle progression through interaction with COPS5 inducing cytoplasmic translocation of CDKN1B leading to the CDKN1B degradation. Coordinates, through its interaction with EP300, the assiociation of MYOD1, EP300 and DDX5 to the MYOG promoter, leading to inhibition of cell-cycle progression and myogenic differentiation promotion. Negatively regulates beta cell proliferation via inhibition of cell-cycle regulatory genes expression through the suppression of their promoter activities. Also required for LHB expression and ovarian maturation. Exacerbates CNS inflammation and demyelination upon cuprizone treatment. The sequence is that of Nuclear protein 1 from Mus musculus (Mouse).